The following is a 130-amino-acid chain: MSGRGKQGGKARAKAKTRSSRAGLQFPVGRVHRLLRKGNYSERVGAGAPVYLAAVLEYLTAEILELAGNAARDNKKTRIIPRHLQLAIRNDEELNKLLGRVTIAQGGVLPNIQAVLLPKKTESHHKPKGK.

The tract at residues 1-22 (MSGRGKQGGKARAKAKTRSSRA) is disordered. Ser2 is subject to Phosphoserine; by RPS6KA5. A Citrulline; alternate modification is found at Arg4. Arg4 carries the post-translational modification Symmetric dimethylarginine; by PRMT5; alternate. Residue Lys6 is modified to N6-(2-hydroxyisobutyryl)lysine; alternate. An N6-(beta-hydroxybutyryl)lysine; alternate modification is found at Lys6. Basic residues predominate over residues 7–19 (QGGKARAKAKTRS). Lys10 bears the N6-(2-hydroxyisobutyryl)lysine mark. Position 10 is an N6-lactoyllysine; alternate (Lys10). Lys37 is subject to N6-(2-hydroxyisobutyryl)lysine; alternate. Lys37 is subject to N6-(beta-hydroxybutyryl)lysine; alternate. At Lys37 the chain carries N6-crotonyllysine; alternate. An N6-(2-hydroxyisobutyryl)lysine mark is found at Lys75, Lys76, and Lys96. The residue at position 96 (Lys96) is an N6-glutaryllysine; alternate. N5-methylglutamine is present on Gln105. Lys119 is subject to N6-(2-hydroxyisobutyryl)lysine; alternate. N6-crotonyllysine; alternate is present on residues Lys119 and Lys120. An N6-glutaryllysine; alternate mark is found at Lys119 and Lys120. Residue Lys120 is modified to N6-(beta-hydroxybutyryl)lysine; alternate. Lys120 is covalently cross-linked (Glycyl lysine isopeptide (Lys-Gly) (interchain with G-Cter in ubiquitin); alternate). Thr121 is modified (phosphothreonine; by DCAF1). Lys126 is subject to N6-(beta-hydroxybutyryl)lysine; alternate. Position 126 is an N6-crotonyllysine; alternate (Lys126). The residue at position 126 (Lys126) is an N6-glutaryllysine; alternate.

Belongs to the histone H2A family. In terms of assembly, the nucleosome is a histone octamer containing two molecules each of H2A, H2B, H3 and H4 assembled in one H3-H4 heterotetramer and two H2A-H2B heterodimers. The octamer wraps approximately 147 bp of DNA. Deiminated on Arg-4 in granulocytes upon calcium entry. Post-translationally, monoubiquitination of Lys-120 (H2AK119Ub) by RING1, TRIM37 and RNF2/RING2 complex gives a specific tag for epigenetic transcriptional repression and participates in X chromosome inactivation of female mammals. It is involved in the initiation of both imprinted and random X inactivation. Ubiquitinated H2A is enriched in inactive X chromosome chromatin. Ubiquitination of H2A functions downstream of methylation of 'Lys-27' of histone H3 (H3K27me). H2AK119Ub by RNF2/RING2 can also be induced by ultraviolet and may be involved in DNA repair. Following DNA double-strand breaks (DSBs), it is ubiquitinated through 'Lys-63' linkage of ubiquitin moieties by the E2 ligase UBE2N and the E3 ligases RNF8 and RNF168, leading to the recruitment of repair proteins to sites of DNA damage. Ubiquitination at Lys-14 and Lys-16 (H2AK13Ub and H2AK15Ub, respectively) in response to DNA damage is initiated by RNF168 that mediates monoubiquitination at these 2 sites, and 'Lys-63'-linked ubiquitin are then conjugated to monoubiquitin; RNF8 is able to extend 'Lys-63'-linked ubiquitin chains in vitro. H2AK119Ub and ionizing radiation-induced 'Lys-63'-linked ubiquitination (H2AK13Ub and H2AK15Ub) are distinct events. In terms of processing, phosphorylation on Ser-2 (H2AS1ph) is enhanced during mitosis. Phosphorylation on Ser-2 by RPS6KA5/MSK1 directly represses transcription. Acetylation of H3 inhibits Ser-2 phosphorylation by RPS6KA5/MSK1. Phosphorylation at Thr-121 (H2AT120ph) by DCAF1 is present in the regulatory region of many tumor suppresor genes and down-regulates their transcription. Symmetric dimethylation on Arg-4 by the PRDM1/PRMT5 complex may play a crucial role in the germ-cell lineage. Post-translationally, glutamine methylation at Gln-105 (H2AQ104me) by FBL is specifically dedicated to polymerase I. It is present at 35S ribosomal DNA locus and impairs binding of the FACT complex. In terms of processing, crotonylation (Kcr) is specifically present in male germ cells and marks testis-specific genes in post-meiotic cells, including X-linked genes that escape sex chromosome inactivation in haploid cells. Crotonylation marks active promoters and enhancers and confers resistance to transcriptional repressors. It is also associated with post-meiotically activated genes on autosomes. Hydroxybutyrylation of histones is induced by starvation. Post-translationally, lactylated in macrophages by EP300/P300 by using lactoyl-CoA directly derived from endogenous or exogenous lactate, leading to stimulates gene transcription.

The protein resides in the nucleus. Its subcellular location is the chromosome. In terms of biological role, core component of nucleosome. Nucleosomes wrap and compact DNA into chromatin, limiting DNA accessibility to the cellular machineries which require DNA as a template. Histones thereby play a central role in transcription regulation, DNA repair, DNA replication and chromosomal stability. DNA accessibility is regulated via a complex set of post-translational modifications of histones, also called histone code, and nucleosome remodeling. The chain is Histone H2A type 1-F (Hist1h2af) from Mus musculus (Mouse).